Consider the following 93-residue polypeptide: Putative membrane protein insertion efficiency factor (93 aa).

It belongs to the UPF0161 family.

It is found in the cell inner membrane. In terms of biological role, could be involved in insertion of integral membrane proteins into the membrane. This chain is Putative membrane protein insertion efficiency factor, found in Cupriavidus taiwanensis (strain DSM 17343 / BCRC 17206 / CCUG 44338 / CIP 107171 / LMG 19424 / R1) (Ralstonia taiwanensis (strain LMG 19424)).